Here is a 492-residue protein sequence, read N- to C-terminus: Catalase isozyme 2 (492 aa).

Residues His65 and Asn138 contribute to the active site. Tyr348 provides a ligand contact to heme.

It belongs to the catalase family. In terms of assembly, homotetramer. It depends on heme as a cofactor.

The protein localises to the peroxisome. The catalysed reaction is 2 H2O2 = O2 + 2 H2O. Functionally, occurs in almost all aerobically respiring organisms and serves to protect cells from the toxic effects of hydrogen peroxide. This is Catalase isozyme 2 (CAT2) from Gossypium hirsutum (Upland cotton).